We begin with the raw amino-acid sequence, 281 residues long: Pantothenate synthetase (281 aa).

ATP is bound at residue 17-24 (MGFLHEGH). The active-site Proton donor is His-24. Gln-48 provides a ligand contact to (R)-pantoate. Gln-48 contributes to the beta-alanine binding site. 134–137 (GEKD) contributes to the ATP binding site. (R)-pantoate is bound at residue Gln-140. ATP is bound by residues Val-163 and 176 to 179 (LSSR).

This sequence belongs to the pantothenate synthetase family. In terms of assembly, homodimer.

The protein resides in the cytoplasm. It carries out the reaction (R)-pantoate + beta-alanine + ATP = (R)-pantothenate + AMP + diphosphate + H(+). Its pathway is cofactor biosynthesis; (R)-pantothenate biosynthesis; (R)-pantothenate from (R)-pantoate and beta-alanine: step 1/1. Functionally, catalyzes the condensation of pantoate with beta-alanine in an ATP-dependent reaction via a pantoyl-adenylate intermediate. This chain is Pantothenate synthetase, found in Deinococcus radiodurans (strain ATCC 13939 / DSM 20539 / JCM 16871 / CCUG 27074 / LMG 4051 / NBRC 15346 / NCIMB 9279 / VKM B-1422 / R1).